Consider the following 170-residue polypeptide: Translocator protein 2 (170 aa).

The next 5 membrane-spanning stretches (helical) occupy residues 3 to 23 (LQGAIFVLLPHLGPILVWLFT), 45 to 65 (VLLLVQTAIYSVVGYASYLVW), 78 to 98 (LPLGLYAVQLTISWTVLVLFF), 104 to 124 (GLALLHLLLLYGLVVSTALIW), and 130 to 150 (LAALLLLPYLAWLTVTSALTY).

It belongs to the TspO/BZRP family. In terms of assembly, homotetramer. May also form homodimer. As to expression, expressed in erythrocytes (at protein level).

The protein resides in the endoplasmic reticulum membrane. The protein localises to the cell membrane. Its function is as follows. Cholesterol-binding protein involved in the redistribution of cholesterol from lipid droplets to the endoplasmic reticulum. Required to meet cholesterol demands during erythropoietic differentiation. May play a role in transport processes at the plasma membrane of erythrocytes, including regulating VDAC-mediated ATP export, and import of the heme precursors protoporphyrin IX and 5-aminolevulinic acid. The sequence is that of Translocator protein 2 (TSPO2) from Homo sapiens (Human).